Reading from the N-terminus, the 287-residue chain is L-cysteine S-thiosulfotransferase subunit SoxA (287 aa).

The first 26 residues, Met1–Ala26, serve as a signal peptide directing secretion. The region spanning Asp74 to Ser168 is the Cytochrome c domain. Residues Cys102, Cys105, His106, Cys140, Cys203, Cys206, and His207 each contribute to the heme c site. Arg244 is a substrate binding site. Residue Cys248 coordinates heme c. Catalysis depends on Cys248, which acts as the Cysteine persulfide intermediate.

The protein belongs to the SoxA family. As to quaternary structure, heterodimer of SoxA and SoxX. Heme c is required as a cofactor. Cysteine persulfide at Cys-248.

It localises to the periplasm. The catalysed reaction is L-cysteinyl-[SoxY protein] + thiosulfate + 2 Fe(III)-[cytochrome c] = S-sulfosulfanyl-L-cysteinyl-[SoxY protein] + 2 Fe(II)-[cytochrome c] + 2 H(+). It catalyses the reaction S-sulfanyl-L-cysteinyl-[SoxY protein] + thiosulfate + 2 Fe(III)-[cytochrome c] = S-(2-sulfodisulfanyl)-L-cysteinyl-[SoxY protein] + 2 Fe(II)-[cytochrome c] + 2 H(+). Its function is as follows. C-type diheme cytochrome, which is part of the SoxAX cytochrome complex involved in sulfur oxidation. The SoxAX complex catalyzes the formation of a heterodisulfide bond between the conserved cysteine residue on a sulfur carrier SoxYZ complex subunit SoxY and thiosulfate or other inorganic sulfur substrates. This leads to the liberation of two electrons, which may be transferred from the SoxAX complex to another cytochrome c and which then may be used for reductive CO(2) fixation. The sequence is that of L-cysteine S-thiosulfotransferase subunit SoxA from Rhodovulum sulfidophilum (Rhodobacter sulfidophilus).